A 160-amino-acid chain; its full sequence is MASHKWLLQMIVFLKTITIAYCLHLQDDTPLFFGAKPLSDVSLIITEPCVSSVYEAWDYAAPPVSNLSEALSGIVVKTKCPVPEVILWFKDKQMAYWTNPYVTLKGLTQSVGEEHKSGDIRDALLDALSGVWVDSTPSSTNIPENGCVWGADRLFQRVCQ.

Residues 1–22 (MASHKWLLQMIVFLKTITIAYC) form the signal peptide. The tract at residues 24–149 (HLQDDTPLFF…TNIPENGCVW (126 aa)) is interaction with gH. The gL alphaherpesvirus-type domain maps to 28-160 (DTPLFFGAKP…ADRLFQRVCQ (133 aa)). Intrachain disulfides connect Cys49–Cys80 and Cys147–Cys159.

The protein belongs to the herpesviridae glycoprotein L (gL) family. Alphaherpesvirinae gL subfamily. Interacts with glycoprotein H (gH); this interaction is necessary for the correct processing and cell surface expression of gH. The heterodimer gH/gL seems to interact with gB trimers during fusion.

It localises to the virion membrane. The protein localises to the host cell membrane. Its subcellular location is the host Golgi apparatus. It is found in the host trans-Golgi network. Functionally, the heterodimer glycoprotein H-glycoprotein L is required for the fusion of viral and plasma membranes leading to virus entry into the host cell. Acts as a functional inhibitor of gH and maintains gH in an inhibited form. Upon binding to host integrins, gL dissociates from gH leading to activation of the viral fusion glycoproteins gB and gH. The sequence is that of Envelope glycoprotein L from Varicella-zoster virus (strain Oka vaccine) (HHV-3).